The following is a 170-amino-acid chain: Helix-loop-helix protein 3 (170 aa).

Residues 1–26 show a composition bias toward low complexity; the sequence is MTASTSSTPSTSTKIPSSSKSSVTKQ. Disordered stretches follow at residues 1–42 and 118–170; these read MTAS…VDQV and TPSP…TETY. The segment at 26–39 is basic motif; degenerate; sequence QTKQKRNERERKRV. The bHLH domain maps to 26-79; the sequence is QTKQKRNERERKRVDQVNQGFVLLQERVPKAAGNKAKLSKVETLREAARYIQEL. Over residues 30–40 the composition is skewed to basic and acidic residues; the sequence is KRNERERKRVD. The interval 40-79 is helix-loop-helix motif; that stretch reads DQVNQGFVLLQERVPKAAGNKAKLSKVETLREAARYIQEL. The segment covering 143 to 157 has biased composition (low complexity); that stretch reads SHYYQESSSSSASTS.

In terms of assembly, efficient DNA binding requires dimerization with another bHLH protein. Forms a heterodimer with hlh-2. As to expression, expressed in the ADL sensory neurons.

The protein resides in the nucleus. Its function is as follows. Probable transcriptional regulator. May mediate transcriptional activation by binding to the E-box motif 5'-CANNTG-3'. Plays a role in the differentiation of the hermaphrodite-specific motor neurons (HSN) that are required for normal egg laying. Might play a role in serotonin production by regulating expression of the tryptophan hydrolase tph-1 which catalyzes serotonin synthesis, in the HSN neurons. Also plays a role in HSN axon guidance towards the vulva and the ventral nerve cord, possibly by promoting the expression of the netrin receptor unc-40. Under feeding conditions, involved in the regulation of the srh-234 chemoreceptor encoding gene expression in the ADL sensory neurons. Together with hlh-2, involved in the induction of programmed cell death in the sister cells of the serotonergic neurosecretory motor (NSM) neurons, probably through the activation of egl-1 transcription. The sequence is that of Helix-loop-helix protein 3 from Caenorhabditis elegans.